Here is a 3176-residue protein sequence, read N- to C-terminus: Large tegument protein deneddylase (3176 aa).

Residues 1–12 show a composition bias toward polar residues; that stretch reads MSNGDWGQSQRP. Positions 1–28 are disordered; sequence MSNGDWGQSQRPRGTGPMRGIRTMDVNA. Residues 1 to 268 form a deubiquitination activity region; sequence MSNGDWGQSQ…YEANGSGFDL (268 aa). The 218-residue stretch at 41–258 folds into the Peptidase C76 domain; it reads LGTASCNQAH…MLEHYGVYDF (218 aa). Residues C61, D193, and H195 contribute to the active site. The disordered stretch occupies residues 319-342; that stretch reads PAARYSPAKTNSPPPSPASAAPAS. 5 tandem repeats follow at residues 335–339, 340–344, 345–349, 350–354, and 355–359. Residues 335–384 form a 10 X 5 AA approximate repeats of P-A-S-A-A region; the sequence is PASAAPASAAPASAAPASAAPASAAQASVAPASVAPASAAPASAAPDSAA. One copy of the 6; approximate repeat lies at 360–364; it reads QASVA. The stretch at 365-369 is one 7; approximate repeat; the sequence is PASVA. 2 consecutive repeat copies span residues 370–374 and 375–379. The span at 376-386 shows a compositional bias: low complexity; the sequence is ASAAPDSAAPA. 6 disordered regions span residues 376 to 683, 928 to 950, 1170 to 1193, 1435 to 1461, 2610 to 3008, and 3023 to 3043; these read ASAA…GSGL, LLSG…SIYR, APIS…TPPL, LMET…RARE, GLVS…PGAR, and TYTV…KMPK. The 10; approximate repeat unit spans residues 380 to 384; the sequence is PDSAA. A compositionally biased stretch (pro residues) spans 457-488; the sequence is PRPPVPPHRPPSAARLPPPVIPIPHQSPPASP. Residues 519 to 546 are compositionally biased toward low complexity; sequence AAPSNPEIPLTTPSPSPTAAAAPTATTL. Over residues 579–636 the composition is skewed to pro residues; the sequence is APSPLLPQQQPPPSAAPAPSPLLPQQQPPPSAARAPSPLPPQQQPLPSATPAPPPAQQ. Positions 581–611 are interaction with inner tegument protein; it reads SPLLPQQQPPPSAAPAPSPLLPQQQPPPSAA. Residues 1170–1182 are compositionally biased toward low complexity; sequence APISPASPSATPA. Polar residues predominate over residues 2619 to 2630; that stretch reads SADNTPASSDRL. A compositionally biased stretch (low complexity) spans 2643–2654; that stretch reads EGSTTAESEASG. Pro residues predominate over residues 2738 to 2747; the sequence is QPAPQQPPSS. Composition is skewed to polar residues over residues 2761-2772 and 2811-2831; these read SPHSTPSTASGS and SAAS…SSQD. Residues 2839–2854 are compositionally biased toward basic and acidic residues; sequence MQREKKQQGGREEAAE. 2 stretches are compositionally biased toward low complexity: residues 2872-2886 and 2901-2912; these read APVV…ATPA and APALGSGLAAPA.

The protein belongs to the herpesviridae large tegument protein family. In terms of assembly, interacts with host CUL1 and CUL4A; these interactions inhibit the E3 ligase activity of cullins. Interacts with inner tegument protein. Interacts with capsid vertex specific component CVC2. Interacts with the major capsid protein/MCP. Interacts with host TRIM25 and YWHAZ.

Its subcellular location is the virion tegument. It localises to the host cytoplasm. It is found in the host nucleus. It carries out the reaction Thiol-dependent hydrolysis of ester, thioester, amide, peptide and isopeptide bonds formed by the C-terminal Gly of ubiquitin (a 76-residue protein attached to proteins as an intracellular targeting signal).. Its function is as follows. Large tegument protein that plays multiple roles in the viral cycle. During viral entry, remains associated with the capsid while most of the tegument is detached and participates in the capsid transport toward the host nucleus. Plays a role in the routing of the capsid at the nuclear pore complex and subsequent uncoating. Within the host nucleus, acts as a deneddylase and promotes the degradation of nuclear CRLs (cullin-RING ubiquitin ligases) and thereby stabilizes nuclear CRL substrates, while cytoplasmic CRLs remain unaffected. These modifications prevent host cell cycle S-phase progression and create a favorable environment allowing efficient viral genome replication. Participates later in the secondary envelopment of capsids. Indeed, plays a linker role for the association of the outer viral tegument to the capsids together with the inner tegument protein. Counteracts host TLR-mediated NF-kappa-B activation through both MYD88 and TICAM1-dependent pathways by interfering with 'Lys-63'- and 'Lys-48'-linked ubiquitination of signaling intermediates such as TRAF6 and IKBKG. Inhibits type I interferon production by forming a tri-molecular complex with host TRIM25 and 14-3-3 thereby promoting TRIM25 autoubiquitination and sequestration of the ligase into inactive protein aggregates. In turn, host RIGI is recruited to the complex but ubiquitination is severely impaired leading to inhibition of the pathway. Also catalyzes the removal of 'Lys-48'- and 'Lys-63'-linked ubiquitin chains on host TBK1 and STING1 suppressing cGAS-STING signaling in addition to the RIGI-MAVS pathway. Inhibits selective autophagy by deubiquitinating host SQSTM1. In turn, decreased SQSTM1 ubiquitination fails to recruit LC3 to SQSTM1-positive aggregates. In the host nucleus, deubiquitinates topoisomerase II subunits TOP2A and TOP2B thereby stabilizing SUMOylated TOP2 which halts the DNA damage response to TOP2-induced double strand DNA breaks and promotes cell survival. The sequence is that of Large tegument protein deneddylase from Homo sapiens (Human).